The sequence spans 329 residues: Ribosomal protein L11 methyltransferase (329 aa).

4 residues coordinate S-adenosyl-L-methionine: T177, G198, D220, and N264.

The protein belongs to the methyltransferase superfamily. PrmA family.

It is found in the cytoplasm. It carries out the reaction L-lysyl-[protein] + 3 S-adenosyl-L-methionine = N(6),N(6),N(6)-trimethyl-L-lysyl-[protein] + 3 S-adenosyl-L-homocysteine + 3 H(+). Methylates ribosomal protein L11. In Helicobacter pylori (strain HPAG1), this protein is Ribosomal protein L11 methyltransferase.